The primary structure comprises 252 residues: Imidazole glycerol phosphate synthase subunit HisF (252 aa).

Catalysis depends on residues D11 and D130.

The protein belongs to the HisA/HisF family. As to quaternary structure, heterodimer of HisH and HisF.

The protein resides in the cytoplasm. The catalysed reaction is 5-[(5-phospho-1-deoxy-D-ribulos-1-ylimino)methylamino]-1-(5-phospho-beta-D-ribosyl)imidazole-4-carboxamide + L-glutamine = D-erythro-1-(imidazol-4-yl)glycerol 3-phosphate + 5-amino-1-(5-phospho-beta-D-ribosyl)imidazole-4-carboxamide + L-glutamate + H(+). It participates in amino-acid biosynthesis; L-histidine biosynthesis; L-histidine from 5-phospho-alpha-D-ribose 1-diphosphate: step 5/9. Functionally, IGPS catalyzes the conversion of PRFAR and glutamine to IGP, AICAR and glutamate. The HisF subunit catalyzes the cyclization activity that produces IGP and AICAR from PRFAR using the ammonia provided by the HisH subunit. This is Imidazole glycerol phosphate synthase subunit HisF from Bacillus cereus (strain Q1).